Reading from the N-terminus, the 115-residue chain is Protein V2 (115 aa).

It belongs to the geminiviridae protein AV2/V2 family. As to quaternary structure, interacts with host SGS3.

It localises to the host cytoplasm. The protein localises to the host perinuclear region. Its function is as follows. Through its interaction with host SGS3, acts as a suppressor of RNA-mediated gene silencing, also known as post-transcriptional gene silencing (PTGS), a mechanism of plant viral defense that limits the accumulation of viral RNAs. The sequence is that of Protein V2 from Cynanchum acutum (Little mallow).